We begin with the raw amino-acid sequence, 163 residues long: Olfactory marker protein (163 aa).

Ala-2 is modified (N-acetylalanine).

It belongs to the olfactory marker protein family. Interacts with BEX1 and BEX2. Uniquely associated with mature olfactory receptor neurons.

The protein resides in the cytoplasm. May act as a modulator of the olfactory signal-transduction cascade. The sequence is that of Olfactory marker protein (Omp) from Rattus norvegicus (Rat).